The chain runs to 315 residues: Probable cell division protein WhiA (315 aa).

The H-T-H motif DNA-binding region spans 275-309; it reads NLKELGEMVPSGVVSKSGINHRLRKINEIADKIRE.

This sequence belongs to the WhiA family.

Its function is as follows. Involved in cell division and chromosome segregation. The protein is Probable cell division protein WhiA of Brevibacillus brevis (strain 47 / JCM 6285 / NBRC 100599).